A 291-amino-acid chain; its full sequence is Bis(5'-nucleosyl)-tetraphosphatase, symmetrical (291 aa).

Belongs to the Ap4A hydrolase family.

It carries out the reaction P(1),P(4)-bis(5'-adenosyl) tetraphosphate + H2O = 2 ADP + 2 H(+). Hydrolyzes diadenosine 5',5'''-P1,P4-tetraphosphate to yield ADP. In Coxiella burnetii (strain CbuK_Q154) (Coxiella burnetii (strain Q154)), this protein is Bis(5'-nucleosyl)-tetraphosphatase, symmetrical.